The sequence spans 417 residues: Maltodextrin-binding protein MdxE (417 aa).

The N-terminal stretch at 1 to 22 is a signal peptide; it reads MVLLKKGFAILAASFLAIGLAA. The N-palmitoyl cysteine moiety is linked to residue C23. A lipid anchor (S-diacylglycerol cysteine) is attached at C23.

Belongs to the bacterial solute-binding protein 1 family. As to quaternary structure, the complex is composed of two ATP-binding proteins (MsmX), two transmembrane proteins (MdxF and MdxG) and a solute-binding protein (MdxE).

It localises to the cell membrane. Its activity is regulated as follows. Inhibited by glucose and lactose. Its function is as follows. Part of the ABC transporter complex involved in maltodextrin import. Binds maltodextrin. Can also bind maltose with low affinity, but is not involved in its uptake. The sequence is that of Maltodextrin-binding protein MdxE (mdxE) from Bacillus subtilis (strain 168).